Here is a 24-residue protein sequence, read N- to C-terminus: Grammistin Gs G (24 aa).

The protein belongs to the grammistin family. Group 1 subfamily. In terms of assembly, exists as aggregates of 3-4 molecules. As to expression, expressed by the skin glands.

The protein localises to the secreted. In terms of biological role, thanks to its abundant amphiphilic alpha-helices, it may integrate into membrane phospholipids, leading to lysis of the membrane. Its high hemolytic activity is inhibited by phospholipids, but not by cholesterol. Has antibacterial activity with a broad spectrum against various species of bacteria including both Gram-positive and Gram-negative groups. Also has high ichthyotoxic activity. This Grammistes sexlineatus (Goldenstriped soapfish) protein is Grammistin Gs G.